A 253-amino-acid chain; its full sequence is Ubiquinone/menaquinone biosynthesis C-methyltransferase UbiE (253 aa).

S-adenosyl-L-methionine is bound by residues Thr76, Asp97, 125 to 126 (NA), and Ser142.

It belongs to the class I-like SAM-binding methyltransferase superfamily. MenG/UbiE family.

It catalyses the reaction a 2-demethylmenaquinol + S-adenosyl-L-methionine = a menaquinol + S-adenosyl-L-homocysteine + H(+). It carries out the reaction a 2-methoxy-6-(all-trans-polyprenyl)benzene-1,4-diol + S-adenosyl-L-methionine = a 5-methoxy-2-methyl-3-(all-trans-polyprenyl)benzene-1,4-diol + S-adenosyl-L-homocysteine + H(+). It participates in quinol/quinone metabolism; menaquinone biosynthesis; menaquinol from 1,4-dihydroxy-2-naphthoate: step 2/2. Its pathway is cofactor biosynthesis; ubiquinone biosynthesis. Functionally, methyltransferase required for the conversion of demethylmenaquinol (DMKH2) to menaquinol (MKH2) and the conversion of 2-polyprenyl-6-methoxy-1,4-benzoquinol (DDMQH2) to 2-polyprenyl-3-methyl-6-methoxy-1,4-benzoquinol (DMQH2). The sequence is that of Ubiquinone/menaquinone biosynthesis C-methyltransferase UbiE from Xylella fastidiosa (strain M12).